The primary structure comprises 121 residues: Ribonuclease P protein component (121 aa).

This sequence belongs to the RnpA family. In terms of assembly, consists of a catalytic RNA component (M1 or rnpB) and a protein subunit.

The enzyme catalyses Endonucleolytic cleavage of RNA, removing 5'-extranucleotides from tRNA precursor.. In terms of biological role, RNaseP catalyzes the removal of the 5'-leader sequence from pre-tRNA to produce the mature 5'-terminus. It can also cleave other RNA substrates such as 4.5S RNA. The protein component plays an auxiliary but essential role in vivo by binding to the 5'-leader sequence and broadening the substrate specificity of the ribozyme. This chain is Ribonuclease P protein component, found in Geobacillus kaustophilus (strain HTA426).